The chain runs to 578 residues: Proline--tRNA ligase (578 aa).

It belongs to the class-II aminoacyl-tRNA synthetase family. ProS type 1 subfamily. As to quaternary structure, homodimer.

Its subcellular location is the cytoplasm. It catalyses the reaction tRNA(Pro) + L-proline + ATP = L-prolyl-tRNA(Pro) + AMP + diphosphate. Catalyzes the attachment of proline to tRNA(Pro) in a two-step reaction: proline is first activated by ATP to form Pro-AMP and then transferred to the acceptor end of tRNA(Pro). As ProRS can inadvertently accommodate and process non-cognate amino acids such as alanine and cysteine, to avoid such errors it has two additional distinct editing activities against alanine. One activity is designated as 'pretransfer' editing and involves the tRNA(Pro)-independent hydrolysis of activated Ala-AMP. The other activity is designated 'posttransfer' editing and involves deacylation of mischarged Ala-tRNA(Pro). The misacylated Cys-tRNA(Pro) is not edited by ProRS. The protein is Proline--tRNA ligase of Burkholderia vietnamiensis (strain G4 / LMG 22486) (Burkholderia cepacia (strain R1808)).